A 457-amino-acid chain; its full sequence is Hepatocyte nuclear factor 3-beta (457 aa).

The tract at residues 14 to 93 (DWSSYYAEPE…AGAMAGMGGS (80 aa)) is transactivation domain 1. Residues 106–113 (LSPSLSPL) carry the Nuclear localization signal motif. Threonine 156 is modified (phosphothreonine). The fork-head DNA-binding region spans 159–252 (KPPYSYISLI…FENGCYLRRQ (94 aa)). Phosphoserine occurs at positions 212 and 283. The span at 280-292 (AQASQAQLGEAAG) shows a compositional bias: low complexity. The tract at residues 280–365 (AQASQAQLGE…PGLPPEAHLK (86 aa)) is disordered. Residues 298–310 (PAGTESPHSSASP) show a composition bias toward polar residues. Threonine 301 carries the phosphothreonine modification. A phosphoserine mark is found at serine 303, serine 306, serine 307, and serine 309. A compositionally biased stretch (low complexity) spans 339-352 (PGQQQQAAAHLLGP). Positions 361-457 (EAHLKPEHHY…VYSRPIMNSS (97 aa)) are transactivation domain 2. Phosphoserine occurs at positions 436 and 457.

Binds DNA as a monomer. Binds TLE1. Interacts with FOXA1 and FOXA3. Interacts with PRKDC. Interacts with AKT1. Interacts with TET1; this interaction may recruit TET1 to specific genomic loci to mediate their demethylation. Phosphorylation on Thr-156 abolishes binding to target promoters and subsequent transcription activation upon insulin stimulation.

The protein localises to the nucleus. Its subcellular location is the cytoplasm. Transcription factor that is involved in embryonic development, establishment of tissue-specific gene expression and regulation of gene expression in differentiated tissues. Is thought to act as a 'pioneer' factor opening the compacted chromatin for other proteins through interactions with nucleosomal core histones and thereby replacing linker histones at target enhancer and/or promoter sites. Binds DNA with the consensus sequence 5'-[AC]A[AT]T[AG]TT[GT][AG][CT]T[CT]-3'. In embryonic development is required for notochord formation. Involved in the development of multiple endoderm-derived organ systems such as the liver, pancreas and lungs; FOXA1 and FOXA2 seem to have at least in part redundant roles. Originally described as a transcription activator for a number of liver genes such as AFP, albumin, tyrosine aminotransferase, PEPCK, etc. Interacts with the cis-acting regulatory regions of these genes. Involved in glucose homeostasis; regulates the expression of genes important for glucose sensing in pancreatic beta-cells and glucose homeostasis. Involved in regulation of fat metabolism. Binds to fibrinogen beta promoter and is involved in IL6-induced fibrinogen beta transcriptional activation. This Homo sapiens (Human) protein is Hepatocyte nuclear factor 3-beta (FOXA2).